A 329-amino-acid polypeptide reads, in one-letter code: Replication factor C small subunit 1 (329 aa).

An ATP-binding site is contributed by 44-51 (GPPGTGKT).

This sequence belongs to the activator 1 small subunits family. RfcS subfamily. Heteromultimer composed of small subunits (RfcS) and large subunits (RfcL).

Functionally, part of the RFC clamp loader complex which loads the PCNA sliding clamp onto DNA. The chain is Replication factor C small subunit 1 from Pyrobaculum aerophilum (strain ATCC 51768 / DSM 7523 / JCM 9630 / CIP 104966 / NBRC 100827 / IM2).